Here is a 502-residue protein sequence, read N- to C-terminus: 2-isopropylmalate synthase (502 aa).

Mn(2+)-binding residues include D1, H189, H191, and N225. The Pyruvate carboxyltransferase domain maps to 1 to 254 (DGEQALQASL…STNINYKEIY (254 aa)). Residues 379-502 (CLKFFSVQSI…VNKKLQELKK (124 aa)) are regulatory domain.

Belongs to the alpha-IPM synthase/homocitrate synthase family. LeuA type 1 subfamily. As to quaternary structure, homodimer. Mn(2+) serves as cofactor.

The protein localises to the cytoplasm. The catalysed reaction is 3-methyl-2-oxobutanoate + acetyl-CoA + H2O = (2S)-2-isopropylmalate + CoA + H(+). The protein operates within amino-acid biosynthesis; L-leucine biosynthesis; L-leucine from 3-methyl-2-oxobutanoate: step 1/4. In terms of biological role, catalyzes the condensation of the acetyl group of acetyl-CoA with 3-methyl-2-oxobutanoate (2-ketoisovalerate) to form 3-carboxy-3-hydroxy-4-methylpentanoate (2-isopropylmalate). The chain is 2-isopropylmalate synthase from Buchnera aphidicola subsp. Macrosiphoniella ludovicianae.